The following is a 225-amino-acid chain: Phosphoribosylformylglycinamidine synthase subunit PurQ (225 aa).

In terms of domain architecture, Glutamine amidotransferase type-1 spans 6–225 (FGVVVFPGSN…WQSILRSFAA (220 aa)). Cys89 acts as the Nucleophile in catalysis. Catalysis depends on residues His198 and Glu200.

As to quaternary structure, part of the FGAM synthase complex composed of 1 PurL, 1 PurQ and 2 PurS subunits.

It is found in the cytoplasm. The catalysed reaction is N(2)-formyl-N(1)-(5-phospho-beta-D-ribosyl)glycinamide + L-glutamine + ATP + H2O = 2-formamido-N(1)-(5-O-phospho-beta-D-ribosyl)acetamidine + L-glutamate + ADP + phosphate + H(+). The enzyme catalyses L-glutamine + H2O = L-glutamate + NH4(+). Its pathway is purine metabolism; IMP biosynthesis via de novo pathway; 5-amino-1-(5-phospho-D-ribosyl)imidazole from N(2)-formyl-N(1)-(5-phospho-D-ribosyl)glycinamide: step 1/2. Functionally, part of the phosphoribosylformylglycinamidine synthase complex involved in the purines biosynthetic pathway. Catalyzes the ATP-dependent conversion of formylglycinamide ribonucleotide (FGAR) and glutamine to yield formylglycinamidine ribonucleotide (FGAM) and glutamate. The FGAM synthase complex is composed of three subunits. PurQ produces an ammonia molecule by converting glutamine to glutamate. PurL transfers the ammonia molecule to FGAR to form FGAM in an ATP-dependent manner. PurS interacts with PurQ and PurL and is thought to assist in the transfer of the ammonia molecule from PurQ to PurL. The sequence is that of Phosphoribosylformylglycinamidine synthase subunit PurQ from Synechococcus sp. (strain JA-2-3B'a(2-13)) (Cyanobacteria bacterium Yellowstone B-Prime).